A 328-amino-acid chain; its full sequence is Oligopeptide transport ATP-binding protein AppD (328 aa).

Residues 5–256 enclose the ABC transporter domain; it reads LEVNNLKTYF…PLHPYTEGLL (252 aa). Position 41–48 (41–48) interacts with ATP; that stretch reads GESGSGKS.

The protein belongs to the ABC transporter superfamily.

The protein localises to the cell membrane. In terms of biological role, this protein is a component of an oligopeptide permease, a binding protein-dependent transport system. This APP system can completely substitute for the OPP system in both sporulation and genetic competence, though, unlike OPP, is incapable of transporting tripeptides. Probably responsible for energy coupling to the transport system. The polypeptide is Oligopeptide transport ATP-binding protein AppD (appD) (Bacillus subtilis (strain 168)).